A 599-amino-acid chain; its full sequence is Bile salt-activated lipase (599 aa).

The N-terminal stretch at 1–20 (MGRLEVLFLGLTCCLAAACA) is a signal peptide. Cys-84 and Cys-100 are disulfide-bonded. Asn-207 carries an N-linked (GlcNAc...) asparagine glycan. Ser-214 functions as the Acyl-ester intermediate in the catalytic mechanism. Cys-266 and Cys-277 are disulfide-bonded. An N-linked (GlcNAc...) asparagine glycan is attached at Asn-325. Catalysis depends on charge relay system residues Asp-340 and His-455. The interval 553–599 (TGDQDTLTPPEDDSEVAPDPPSDDSQVVPVPPTDDSVEAQMPATIGF) is disordered. Repeat copies occupy residues 559–569 (LTPPEDDSEVA), 570–580 (PDPPSDDSQVV), and 581–588 (PVPPTDDS). The 4 X 11 AA tandem repeats, O-glycosylated region stretch occupies residues 559–588 (LTPPEDDSEVAPDPPSDDSQVVPVPPTDDS).

The protein belongs to the type-B carboxylesterase/lipase family. As to quaternary structure, interacts with CLC. As to expression, EXpressed by eosinophils.

It is found in the secreted. It carries out the reaction a triacylglycerol + H2O = a diacylglycerol + a fatty acid + H(+). The enzyme catalyses 1,2,3-tri-(9Z-octadecenoyl)-glycerol + H2O = di-(9Z)-octadecenoylglycerol + (9Z)-octadecenoate + H(+). It catalyses the reaction 1,2,3-trioctanoylglycerol + H2O = dioctanoylglycerol + octanoate + H(+). The catalysed reaction is a sterol ester + H2O = a sterol + a fatty acid + H(+). It carries out the reaction an acetyl ester + H2O = an aliphatic alcohol + acetate + H(+). The enzyme catalyses a butanoate ester + H2O = an aliphatic alcohol + butanoate + H(+). It catalyses the reaction 9-hexadecanoyloxy-octadecanoate + H2O = 9-hydroxy-octadecanoate + hexadecanoate + H(+). The catalysed reaction is 9-(9Z-octadecenoyloxy)-octadecanoate + H2O = 9-hydroxy-octadecanoate + (9Z)-octadecenoate + H(+). It carries out the reaction cholesteryl (9Z-octadecenoate) + H2O = cholesterol + (9Z)-octadecenoate + H(+). The enzyme catalyses 1-hexadecanoyl-sn-glycero-3-phosphocholine + H2O = sn-glycerol 3-phosphocholine + hexadecanoate + H(+). It catalyses the reaction 12-hexadecanoyloxy-octadecanoate + H2O = 12-hydroxyoctadecanoate + hexadecanoate + H(+). The catalysed reaction is 12-(9Z-octadecenoyloxy)-octadecanoate + H2O = 12-hydroxyoctadecanoate + (9Z)-octadecenoate + H(+). It carries out the reaction 13-(9Z-octadecenoyloxy)-octadecanoate + H2O = 13-hydroxy-octadecanoate + (9Z)-octadecenoate + H(+). The enzyme catalyses 9-(9Z-hexadecenoyloxy)-octadecanoate + H2O = (9Z)-hexadecenoate + 9-hydroxy-octadecanoate + H(+). It catalyses the reaction 12-(9Z-hexadecenoyloxy)-octadecanoate + H2O = 12-hydroxyoctadecanoate + (9Z)-hexadecenoate + H(+). The catalysed reaction is 13-(9Z-hexadecenoyloxy)-octadecanoate + H2O = 13-hydroxy-octadecanoate + (9Z)-hexadecenoate + H(+). It carries out the reaction 12-octadecanoyloxy-octadecanoate + H2O = 12-hydroxyoctadecanoate + octadecanoate + H(+). The enzyme catalyses 13-octadecanoyloxy-octadecanoate + H2O = 13-hydroxy-octadecanoate + octadecanoate + H(+). It catalyses the reaction 5-(9Z-hexadecenoyloxy)-octadecanoate + H2O = 5-hydroxy-octadecanoate + (9Z)-hexadecenoate + H(+). The catalysed reaction is 9-octadecanoyloxy-octadecanoate + H2O = 9-hydroxy-octadecanoate + octadecanoate + H(+). With respect to regulation, activated by bile salts such as sodium taurocholate. Catalyzes the hydrolysis of a wide range of substrates including cholesteryl esters, phospholipids, lysophospholipids, di- and tri-acylglycerols, and fatty acid esters of hydroxy fatty acids (FAHFAs). Preferentially hydrolyzes FAHFAs with the ester bond further away from the carboxylate. Unsaturated FAHFAs are hydrolyzed more quickly than saturated FAHFAs. Has an essential role in the complete digestion of dietary lipids and their intestinal absorption, along with the absorption of fat-soluble vitamins. In Mus musculus (Mouse), this protein is Bile salt-activated lipase (Cel).